Here is a 266-residue protein sequence, read N- to C-terminus: 3-methyl-2-oxobutanoate hydroxymethyltransferase (266 aa).

2 residues coordinate Mg(2+): Asp-45 and Asp-84. 3-methyl-2-oxobutanoate-binding positions include 45–46, Asp-84, and Lys-112; that span reads DS. Glu-114 serves as a coordination point for Mg(2+). The Proton acceptor role is filled by Glu-181.

Belongs to the PanB family. In terms of assembly, homodecamer; pentamer of dimers. Requires Mg(2+) as cofactor.

It is found in the cytoplasm. The catalysed reaction is 3-methyl-2-oxobutanoate + (6R)-5,10-methylene-5,6,7,8-tetrahydrofolate + H2O = 2-dehydropantoate + (6S)-5,6,7,8-tetrahydrofolate. It participates in cofactor biosynthesis; (R)-pantothenate biosynthesis; (R)-pantoate from 3-methyl-2-oxobutanoate: step 1/2. Its function is as follows. Catalyzes the reversible reaction in which hydroxymethyl group from 5,10-methylenetetrahydrofolate is transferred onto alpha-ketoisovalerate to form ketopantoate. The polypeptide is 3-methyl-2-oxobutanoate hydroxymethyltransferase (Pseudomonas fluorescens (strain Pf0-1)).